Here is a 1200-residue protein sequence, read N- to C-terminus: SR-related and CTD-associated factor 4 (1200 aa).

Residues 1 to 139 (MDAVNAFNQE…PLLDMAAGTS (139 aa)) enclose the CID domain. The residue at position 49 (Lys-49) is an N6-acetyllysine. Over residues 140-153 (NAAPGAENVTNNEG) the composition is skewed to polar residues. 3 disordered regions span residues 140 to 172 (NAAP…PTNS), 299 to 324 (VPAS…MQQP), and 346 to 566 (SMQH…QIKS). A Phosphoserine modification is found at Ser-154. Pro residues-rich tracts occupy residues 367-390 (APPP…PGMP) and 399-461 (LPQP…PPVQ). Positions 462 to 471 (PTFQPTFQPQ) are enriched in low complexity. Residues 493–503 (EVKRHVPESRK) are compositionally biased toward basic and acidic residues. Residues 504 to 541 (SRSRSPKRRRSRSGSRSRRSRHRRSRSRSRDRRRHSPR) show a composition bias toward basic residues. Residues 543-558 (RSQERRDREKERERRQ) show a composition bias toward basic and acidic residues. The 75-residue stretch at 574–648 (TTLWVGQLDK…KSIKIAWALN (75 aa)) folds into the RRM domain. Disordered stretches follow at residues 696–724 (WKGI…VSPI), 834–875 (VSGA…SLLG), and 927–1200 (PPHM…EAPR). At Ser-722 the chain carries Phosphoserine. Composition is skewed to pro residues over residues 856-868 (PAAP…PPVT) and 927-958 (PPHM…PPHG). A compositionally biased stretch (gly residues) spans 965 to 978 (GMPGLGGPGPGPGG). Residues 986-1036 (QQQPQQQQQQQQQQQQQQQQQQQQPPPQQSQTQQQPAPSQQPAPAQQQPQQ) show a composition bias toward low complexity. Position 1058 is a phosphoserine (Ser-1058). Over residues 1063–1139 (VENDRERYGS…RGKEKHEVAD (77 aa)) the composition is skewed to basic and acidic residues. Residues 1153-1162 (QVGNTDTVSE) show a composition bias toward polar residues. Position 1178 is a phosphoserine (Ser-1178).

Interacts with POLR2A; via C-terminal heptapeptide repeat domain (CTD) phosphorylated at 'Ser-2' and 'Ser-5'.

The protein localises to the nucleus. Functionally, anti-terminator protein required to prevent early mRNA termination during transcription. Together with SCAF8, acts by suppressing the use of early, alternative poly(A) sites, thereby preventing the accumulation of non-functional truncated proteins. Mechanistically, associates with the phosphorylated C-terminal heptapeptide repeat domain (CTD) of the largest RNA polymerase II subunit (POLR2A), and subsequently binds nascent RNA upstream of early polyadenylation sites to prevent premature mRNA transcript cleavage and polyadenylation. Independently of SCAF8, also acts as a suppressor of transcriptional readthrough. The protein is SR-related and CTD-associated factor 4 of Rattus norvegicus (Rat).